A 402-amino-acid polypeptide reads, in one-letter code: N-acetyltransferase Eis (402 aa).

Residues 3–154 (VTLCSPTEDD…RFARFHADAP (152 aa)) form the N-acetyltransferase domain. Acetyl-CoA is bound by residues 85–87 (VAV), 93–98 (RRGLLR), and 121–122 (SE). Tyr-126 functions as the Proton donor in the catalytic mechanism. The active-site Proton acceptor; via carboxylate is the Phe-402.

The protein belongs to the acetyltransferase Eis family. As to quaternary structure, homohexamer; trimer of dimers.

It localises to the secreted. It is found in the host cytoplasmic vesicle. The protein resides in the host phagosome. Its subcellular location is the extracellular vesicle. The protein localises to the bacterial extracellular vesicle. It localises to the host extracellular space. The enzyme catalyses L-lysyl-[protein] + acetyl-CoA = N(6)-acetyl-L-lysyl-[protein] + CoA + H(+). Effector that is released into the host cell and affects host immune responses. Acts as an acetyltransferase that acetylates lysine residues of host proteins. The polypeptide is N-acetyltransferase Eis (Mycobacterium bovis (strain ATCC BAA-935 / AF2122/97)).